The following is a 207-amino-acid chain: ATP phosphoribosyltransferase (207 aa).

It belongs to the ATP phosphoribosyltransferase family. Short subfamily. In terms of assembly, heteromultimer composed of HisG and HisZ subunits.

The protein resides in the cytoplasm. The enzyme catalyses 1-(5-phospho-beta-D-ribosyl)-ATP + diphosphate = 5-phospho-alpha-D-ribose 1-diphosphate + ATP. It functions in the pathway amino-acid biosynthesis; L-histidine biosynthesis; L-histidine from 5-phospho-alpha-D-ribose 1-diphosphate: step 1/9. Functionally, catalyzes the condensation of ATP and 5-phosphoribose 1-diphosphate to form N'-(5'-phosphoribosyl)-ATP (PR-ATP). Has a crucial role in the pathway because the rate of histidine biosynthesis seems to be controlled primarily by regulation of HisG enzymatic activity. This is ATP phosphoribosyltransferase (hisG) from Dictyoglomus turgidum (strain DSM 6724 / Z-1310).